The sequence spans 1322 residues: FERM and PDZ domain-containing protein 4 (1322 aa).

In terms of domain architecture, WW spans 33–66; it reads QVPPYGWEMTANRDGRDYFINHMTQAIPFDDPRL. A PDZ domain is found at 78 to 155; it reads KVEMRRDPVL…SILLTVIQPY (78 aa). In terms of domain architecture, FERM spans 204–519; sequence NVLKVYLENG…GYYRLLVDSR (316 aa). Disordered regions lie at residues 809–847, 900–927, 952–983, 1027–1080, 1105–1148, 1160–1180, and 1207–1227; these read APPP…EIPV, SPES…TAQK, EFPA…PPKV, RKSK…STFN, SGLE…GQGD, AKDL…PSKL, and HFSL…TGSS. Residues 902–921 show a composition bias toward low complexity; sequence ESSSDSGNETNSSEMTESSE. Low complexity predominate over residues 1041 to 1054; the sequence is NGNTTGKKQQGTKT. The span at 1067–1080 shows a compositional bias: polar residues; sequence TVSSRDSQHLSTFN. Residues 1207–1217 show a composition bias toward polar residues; that stretch reads HFSLQSSQGSS.

Interacts (via C-terminus) with DLG1, DLG2, DLG3 and DLG4/PSD95. Interacts (via N-terminus) with ARHGEF7; the interaction is mediated by the PDZ domain. Interacts with GPSM2 (via TPR repeat region).

Its subcellular location is the cell projection. The protein resides in the dendritic spine. Functionally, positive regulator of dendritic spine morphogenesis and density. Required for the maintenance of excitatory synaptic transmission. Binds phosphatidylinositol 4,5-bisphosphate. This chain is FERM and PDZ domain-containing protein 4 (FRMPD4), found in Homo sapiens (Human).